A 510-amino-acid polypeptide reads, in one-letter code: ATP synthase subunit alpha (510 aa).

170–177 contacts ATP; sequence GDRQTGKT.

The protein belongs to the ATPase alpha/beta chains family. In terms of assembly, F-type ATPases have 2 components, CF(1) - the catalytic core - and CF(0) - the membrane proton channel. CF(1) has five subunits: alpha(3), beta(3), gamma(1), delta(1), epsilon(1). CF(0) has three main subunits: a(1), b(2) and c(9-12). The alpha and beta chains form an alternating ring which encloses part of the gamma chain. CF(1) is attached to CF(0) by a central stalk formed by the gamma and epsilon chains, while a peripheral stalk is formed by the delta and b chains.

It localises to the cell inner membrane. It catalyses the reaction ATP + H2O + 4 H(+)(in) = ADP + phosphate + 5 H(+)(out). In terms of biological role, produces ATP from ADP in the presence of a proton gradient across the membrane. The alpha chain is a regulatory subunit. The polypeptide is ATP synthase subunit alpha (Acidiphilium cryptum (strain JF-5)).